A 413-amino-acid polypeptide reads, in one-letter code: MKEVVYWSPKKVADWLLENAMPEYCEPLEHFTGQDLINLTQEDFKKPPLCRVSSDNGQRLLDMIETLKMEHHLEAHKNGHANGHLNIGVDIPTPDGSFSIKIKPNGMPNGYRKEMIKIPMPELERSQYPMEWGKTFLAFLYALSCFVLTTVMISVVHERVPPKEVQPPLPDTFFDHFNRVQWAFSICEINGMILVGLWLIQWLLLKYKSIISRRFFCIVGTLYLYRCITMYVTTLPVPGMHFNCSPKLFGDWEAQLRRIMKLIAGGGLSITGSHNMCGDYLYSGHTVMLTLTYLFIKEYSPRRLWWYHWICWLLSVVGIFCILLAHDHYTVDVVVAYYITTRLFWWYHTMANQQVLKEASQMNLLARVWWYRPFQYFEKNVQGIVPRSYHWPFPWPVVHLSRQVKYSRLVNDT.

Residues 7 to 70 form the SAM domain; the sequence is WSPKKVADWL…LDMIETLKME (64 aa). Serine 8 carries the post-translational modification Phosphoserine. 5 helical membrane-spanning segments follow: residues 136-156, 184-204, 215-235, 276-296, and 304-324; these read FLAF…ISVV, FSIC…QWLL, FFCI…VTTL, MCGD…YLFI, and LWWY…CILL. Histidine 285 is a catalytic residue. The Cytoplasmic portion of the chain corresponds to 325-413; sequence AHDHYTVDVV…VKYSRLVNDT (89 aa). Catalysis depends on residues histidine 328 and aspartate 332.

The protein belongs to the sphingomyelin synthase family. In terms of tissue distribution, brain, heart, kidney, liver, muscle and stomach.

The protein resides in the golgi apparatus membrane. The enzyme catalyses an N-acylsphing-4-enine + a 1,2-diacyl-sn-glycero-3-phosphocholine = a sphingomyelin + a 1,2-diacyl-sn-glycerol. The catalysed reaction is an N-acylsphinganine + a 1,2-diacyl-sn-glycero-3-phosphocholine = an N-acylsphinganine-1-phosphocholine + a 1,2-diacyl-sn-glycerol. It carries out the reaction an N-acyl-(4R)-4-hydroxysphinganine + a 1,2-diacyl-sn-glycero-3-phosphocholine = an N-acyl-(4R)-4-hydroxysphinganine-phosphocholine + a 1,2-diacyl-sn-glycerol. It catalyses the reaction 1-(9Z-octadecenoyl)-2-acyl-sn-3-glycerol + a sphingomyelin = a 1-(9Z-octadecenoyl)-2-acyl-sn-glycero-3-phosphocholine + an N-acylsphing-4-enine. The enzyme catalyses N-hexadecanoylsphinganine + a 1,2-diacyl-sn-glycero-3-phosphocholine = N-hexadecanoyl-sphinganine-1-phosphocholine + a 1,2-diacyl-sn-glycerol. The catalysed reaction is N-hexadecanoyl-(4R)-hydroxysphinganine + a 1,2-diacyl-sn-glycero-3-phosphocholine = N-hexadecanoyl-(4R)-hydroxysphinganine-phosphocholine + a 1,2-diacyl-sn-glycerol. It carries out the reaction an N-acylsphing-4-enine + a 1,2-diacyl-sn-glycero-3-phosphoethanolamine = an N-acylsphing-4-enine 1-phosphoethanolamine + a 1,2-diacyl-sn-glycerol. Its pathway is sphingolipid metabolism. With respect to regulation, inhibited by bacterial PC-phospholipase C inhibitor D609. In terms of biological role, major sphingomyelin synthase at the Golgi apparatus. Catalyzes the reversible transfer of phosphocholine moiety in sphingomyelin biosynthesis: in the forward reaction transfers phosphocholine head group of phosphatidylcholine (PC) on to ceramide (CER) to form ceramide phosphocholine (sphingomyelin, SM) and diacylglycerol (DAG) as by-product, and in the reverse reaction transfers phosphocholine from SM to DAG to form PC and CER. The direction of the reaction depends on the levels of CER and DAG in Golgi membranes. Converts the newly synthesized CER, that is transported from the endoplasmic reticulum to the trans-Golgi by the Cer transport protein (CERT), to SM. Can form a heteromeric complex with glucosylceramide synthase (GCS) increasing SMS activity and reducing glucosylceramide synthesis, a critical mechanism that controls the metabolic fate of CER in the Golgi. Does not use free phosphorylcholine or CDP-choline as donor. Can also transfer phosphoethanolamine head group of phosphatidylethanolamine (PE) on to CER to form ceramide phosphoethanolamine (CPE). Regulates receptor-mediated signal transduction via mitogenic DAG and proapoptotic CER, as well as via SM, a structural component of membrane rafts that serve as platforms for signal transduction and protein sorting. Plays a role in secretory transport via regulation of DAG pool at the Golgi apparatus and its downstream effects on PRKD1. The protein is Phosphatidylcholine:ceramide cholinephosphotransferase 1 (SGMS1) of Homo sapiens (Human).